Consider the following 274-residue polypeptide: Phosphatidylglycerol--prolipoprotein diacylglyceryl transferase (274 aa).

4 helical membrane-spanning segments follow: residues 19–39 (VGSV…VLGL), 59–79 (LAIW…VLFQ), 93–113 (IWRG…AALI), and 120–140 (VSFW…QAIG). A 1,2-diacyl-sn-glycero-3-phospho-(1'-sn-glycerol) is bound at residue arginine 141. Transmembrane regions (helical) follow at residues 181–201 (TFLY…ALFF), 209–229 (GTIF…IEGL), and 243–263 (QVVS…LYLL).

Belongs to the Lgt family.

The protein resides in the cell inner membrane. The enzyme catalyses L-cysteinyl-[prolipoprotein] + a 1,2-diacyl-sn-glycero-3-phospho-(1'-sn-glycerol) = an S-1,2-diacyl-sn-glyceryl-L-cysteinyl-[prolipoprotein] + sn-glycerol 1-phosphate + H(+). It functions in the pathway protein modification; lipoprotein biosynthesis (diacylglyceryl transfer). Functionally, catalyzes the transfer of the diacylglyceryl group from phosphatidylglycerol to the sulfhydryl group of the N-terminal cysteine of a prolipoprotein, the first step in the formation of mature lipoproteins. In Acaryochloris marina (strain MBIC 11017), this protein is Phosphatidylglycerol--prolipoprotein diacylglyceryl transferase.